A 329-amino-acid chain; its full sequence is Prostaglandin reductase 1 (329 aa).

Phosphothreonine is present on threonine 18. The residue at position 20 (serine 20) is a Phosphoserine. NADP(+) contacts are provided by residues 152-155 (GAVG), lysine 178, tyrosine 193, asparagine 217, 239-245 (CGAISTY), 270-272 (FVV), and asparagine 321. Lysine 178 carries the post-translational modification N6-(2-hydroxyisobutyryl)lysine; alternate. An N6-acetyllysine; alternate modification is found at lysine 178.

This sequence belongs to the NADP-dependent oxidoreductase L4BD family. As to quaternary structure, monomer or homodimer. In terms of tissue distribution, high expression in the kidney, liver, and intestine but not in leukocytes.

It is found in the cytoplasm. It carries out the reaction 13,14-dihydro-15-oxo-prostaglandin E1 + NADP(+) = 15-oxoprostaglandin E1 + NADPH + H(+). It catalyses the reaction 13,14-dihydro-15-oxo-prostaglandin E2 + NADP(+) = 15-oxoprostaglandin E2 + NADPH + H(+). The enzyme catalyses 13,14-dihydro-15-oxo-prostaglandin F1alpha + NADP(+) = 15-oxoprostaglandin F1alpha + NADPH + H(+). The catalysed reaction is 13,14-dihydro-15-oxo-PGF2alpha + NADP(+) = 15-oxoprostaglandin F2alpha + NADPH + H(+). It carries out the reaction leukotriene B4 + NADP(+) = 12-oxo-leukotriene B4 + NADPH + H(+). It catalyses the reaction 20-hydroxy-leukotriene B4 + NADP(+) = 12-oxo-20-hydroxy-leukotriene B4 + NADPH + H(+). The enzyme catalyses 6-trans-leukotriene B4 + NADP(+) = 12-oxo-(5S)-hydroxy-(6E,8E,10E,14Z)-eicosatetraenoate + NADPH + H(+). The catalysed reaction is (5S,12S)-dihydroxy-(6E,10E,12E,14Z)-eicosatetraenoate + NADP(+) = 12-oxo-(5S)-hydroxy-(6E,8E,10E,14Z)-eicosatetraenoate + NADPH + H(+). It carries out the reaction an n-alkanal + NADP(+) = an alk-2-enal + NADPH + H(+). It catalyses the reaction hexanal + NADP(+) = (E)-hex-2-enal + NADPH + H(+). The enzyme catalyses octanal + NADP(+) = (2E)-octenal + NADPH + H(+). The catalysed reaction is decanal + NADP(+) = (2E)-decenal + NADPH + H(+). It carries out the reaction dodecanal + NADP(+) = (2E)-dodecenal + NADPH + H(+). It catalyses the reaction 4-hydroxynonanal + NADP(+) = (E)-4-hydroxynon-2-enal + NADPH + H(+). The enzyme catalyses pentan-2-one + NADP(+) = (E)-pent-3-en-2-one + NADPH + H(+). The catalysed reaction is nonan-2-one + NADP(+) = (3E)-nonen-2-one + NADPH + H(+). In terms of biological role, NAD(P)H-dependent oxidoreductase involved in metabolic inactivation of pro- and anti-inflammatory eicosanoids: prostaglandins (PG), leukotrienes (LT) and lipoxins (LX). Catalyzes with high efficiency the reduction of the 13,14 double bond of 15-oxoPGs, including 15-oxo-PGE1, 15-oxo-PGE2, 15-oxo-PGF1-alpha and 15-oxo-PGF2-alpha. Catalyzes with lower efficiency the oxidation of the hydroxyl group at C12 of LTB4 and its derivatives, converting them into biologically less active 12-oxo-LTB4 metabolites. Reduces 15-oxo-LXA4 to 13,14 dihydro-15-oxo-LXA4, enhancing neutrophil recruitment at the inflammatory site. May play a role in metabolic detoxification of alkenals and ketones. Reduces alpha,beta-unsaturated alkenals and ketones, particularly those with medium-chain length, showing highest affinity toward (2E)-decenal and (3E)-3-nonen-2-one. May inactivate 4-hydroxy-2-nonenal, a cytotoxic lipid constituent of oxidized low-density lipoprotein particles. This Homo sapiens (Human) protein is Prostaglandin reductase 1 (PTGR1).